We begin with the raw amino-acid sequence, 338 residues long: Ketol-acid reductoisomerase (NADP(+)) (338 aa).

One can recognise a KARI N-terminal Rossmann domain in the interval 3–183 (IELLYDADAD…GGARAGVIPT (181 aa)). Residues 26–29 (YGSQ), arginine 49, serine 52, serine 54, and 84–87 (DTSQ) each bind NADP(+). Histidine 109 is a catalytic residue. Position 135 (glycine 135) interacts with NADP(+). Positions 184–329 (TFEAETVTDL…AKLRDLMSWV (146 aa)) constitute a KARI C-terminal knotted domain. Positions 192, 196, 228, and 232 each coordinate Mg(2+). Serine 253 provides a ligand contact to substrate.

This sequence belongs to the ketol-acid reductoisomerase family. It depends on Mg(2+) as a cofactor.

It catalyses the reaction (2R)-2,3-dihydroxy-3-methylbutanoate + NADP(+) = (2S)-2-acetolactate + NADPH + H(+). The catalysed reaction is (2R,3R)-2,3-dihydroxy-3-methylpentanoate + NADP(+) = (S)-2-ethyl-2-hydroxy-3-oxobutanoate + NADPH + H(+). Its pathway is amino-acid biosynthesis; L-isoleucine biosynthesis; L-isoleucine from 2-oxobutanoate: step 2/4. It participates in amino-acid biosynthesis; L-valine biosynthesis; L-valine from pyruvate: step 2/4. Functionally, involved in the biosynthesis of branched-chain amino acids (BCAA). Catalyzes an alkyl-migration followed by a ketol-acid reduction of (S)-2-acetolactate (S2AL) to yield (R)-2,3-dihydroxy-isovalerate. In the isomerase reaction, S2AL is rearranged via a Mg-dependent methyl migration to produce 3-hydroxy-3-methyl-2-ketobutyrate (HMKB). In the reductase reaction, this 2-ketoacid undergoes a metal-dependent reduction by NADPH to yield (R)-2,3-dihydroxy-isovalerate. This chain is Ketol-acid reductoisomerase (NADP(+)), found in Corynebacterium glutamicum (strain ATCC 13032 / DSM 20300 / JCM 1318 / BCRC 11384 / CCUG 27702 / LMG 3730 / NBRC 12168 / NCIMB 10025 / NRRL B-2784 / 534).